The following is a 512-amino-acid chain: rRNA N(6)-adenosine-methyltransferase ZCCHC4 (512 aa).

8 residues coordinate Zn(2+): cysteine 39, histidine 41, cysteine 63, cysteine 72, cysteine 124, cysteine 127, histidine 139, and histidine 142. The GRF-type zinc finger occupies 39–81; it reads CPHGPTLLFVKVNQGKEETRKFYACSACRDRKDCNFFQWEDEK. S-adenosyl-L-methionine-binding positions include 171–174, arginine 201, aspartate 223, 241–242, and aspartate 274; these read QYLF and NM. The interval 335 to 355 is regulatory loop; sequence QVDYDNHALYKHGKTGRKQSP. Cysteine 378, cysteine 381, histidine 391, cysteine 392, cysteine 395, cysteine 398, histidine 408, cysteine 409, cysteine 412, cysteine 415, histidine 422, cysteine 423, cysteine 426, cysteine 429, histidine 434, and cysteine 436 together coordinate Zn(2+). Residues 393–445 enclose the DHHC domain; the sequence is VHCNSCTSKDGRKWSHCFLCKKCVKPSWIHCNTCNRCALPDHSCLGPKDGCFI. The CCHC-type zinc-finger motif lies at 441–458; that stretch reads DGCFICGALDHKRSNCPN.

It belongs to the ZCCHC4 family. Interacts with components of the ASC-1 complex TRIP4, ASCC1, ASCC2 and ASCC3. Interact with AHCYL1 and AHCYL2. Interact with YTHDC2.

The protein localises to the cytoplasm. It localises to the nucleus. The protein resides in the nucleolus. The enzyme catalyses adenosine(4220) in 28S rRNA + S-adenosyl-L-methionine = N(6)-methyladenosine(4220) in 28S rRNA + S-adenosyl-L-homocysteine + H(+). RRNA N6-methyltransferase that specifically methylates the adenine in position 4220 of 28S rRNA. N6-methylation of adenine(4220) in 28S rRNA is required for translation. The polypeptide is rRNA N(6)-adenosine-methyltransferase ZCCHC4 (Mus musculus (Mouse)).